The sequence spans 200 residues: Large ribosomal subunit protein uL22c (200 aa).

This sequence belongs to the universal ribosomal protein uL22 family. In terms of assembly, part of the 50S ribosomal subunit.

The protein resides in the plastid. It is found in the chloroplast. Its function is as follows. This protein binds specifically to 23S rRNA. The globular domain of the protein is located near the polypeptide exit tunnel on the outside of the subunit, while an extended beta-hairpin is found that lines the wall of the exit tunnel in the center of the 70S ribosome. In Medicago sativa (Alfalfa), this protein is Large ribosomal subunit protein uL22c (rpl22).